The following is a 268-amino-acid chain: NH(3)-dependent NAD(+) synthetase (268 aa).

46–53 (GVSGGQDS) serves as a coordination point for ATP. D52 is a binding site for Mg(2+). R140 provides a ligand contact to deamido-NAD(+). T160 is an ATP binding site. E165 contributes to the Mg(2+) binding site. Residues K173 and D180 each coordinate deamido-NAD(+). An ATP-binding site is contributed by K189. Residue 260 to 261 (HK) coordinates deamido-NAD(+).

This sequence belongs to the NAD synthetase family. Homodimer.

The catalysed reaction is deamido-NAD(+) + NH4(+) + ATP = AMP + diphosphate + NAD(+) + H(+). The protein operates within cofactor biosynthesis; NAD(+) biosynthesis; NAD(+) from deamido-NAD(+) (ammonia route): step 1/1. Its function is as follows. Catalyzes the ATP-dependent amidation of deamido-NAD to form NAD. Uses ammonia as a nitrogen source. The protein is NH(3)-dependent NAD(+) synthetase of Buchnera aphidicola subsp. Acyrthosiphon pisum (strain Tuc7).